Reading from the N-terminus, the 400-residue chain is MNNLDEIKIESKTCLNDQEQEVKIDNMHMSDQDKNKIEIKNKSGLGEKWPEPIVRVQSLAESNLTSLPDRYIKPPSQRPQTTIIDHQPEVADINIPIIDLDSLFSGNEDDKKRISEACREWGFFQVINHGVKPELMDAARETWKSFFNLPVEAKEVYSNSPRTYEGYGSRLGVEKGAILDWNDYYYLHFLPLALKDFNKWPSLPSNIREMNDEYGKELVKLGGRLMTILSSNLGLRAEQLQEAFGGEDVGACLRVNYYPKCPQPELALGLSPHSDPGGMTILLPDDQVVGLQVRHGDTWITVNPLRHAFIVNIGDQIQILSNSKYKSVEHRVIVNSEKERVSLAFFYNPKSDIPIQPMQQLVTSTMPPLYPPMTFDQYRLFIRTQGPRGKSHVESHISPR.

The Fe2OG dioxygenase domain occupies 248 to 349; it reads DVGACLRVNY…RVSLAFFYNP (102 aa). Jasmonate is bound at residue Arg254. 2-oxoglutarate is bound by residues Asn256 and Tyr258. 3 residues coordinate Fe cation: His273, Asp275, and His330. Residues Arg340 and Ser342 each contribute to the 2-oxoglutarate site. The jasmonate site is built by Arg379 and Arg383.

The protein belongs to the iron/ascorbate-dependent oxidoreductase family. The cofactor is L-ascorbate. Fe(2+) is required as a cofactor.

It catalyses the reaction jasmonate + 2-oxoglutarate + O2 = (1R,2R)-12-hydroxyjasmonate + succinate + CO2. In terms of biological role, 2-oxoglutarate-dependent dioxygenase involved in the oxidation of jasmonate (JA), a stress-induced phytohormone synthesized in response to attack by pathogens and herbivores, which triggers the activation of defense responses via the JA-mediated signaling pathway. Converts JA to 12-hydroxyjasmonate (12OH-JA), an inactive form of JA. Prevents over-accumulation of JA and indirectly its bioactive form JA-Ile under stress response. Acts as a negative regulator of JA-mediated defense signaling, by contributing to 12OH-JA accumulation, which represses JA defense responses upon infection by the fungal pathogen Botrytis cinerea and the herbivorous caterpillar Mamestra brassicae. The polypeptide is Jasmonate-induced oxygenase 1 (Arabidopsis thaliana (Mouse-ear cress)).